The chain runs to 337 residues: Inositol 2-dehydrogenase (337 aa).

This sequence belongs to the Gfo/Idh/MocA family. As to quaternary structure, homotetramer.

The enzyme catalyses myo-inositol + NAD(+) = scyllo-inosose + NADH + H(+). Its function is as follows. Involved in the oxidation of myo-inositol (MI) to 2-keto-myo-inositol (2KMI or 2-inosose). This is Inositol 2-dehydrogenase from Burkholderia cenocepacia (strain HI2424).